The following is a 376-amino-acid chain: Geranylgeranyl transferase type-1 subunit beta (376 aa).

PFTB repeat units lie at residues 128-179 (KRSL…YICG), 192-231 (TEKL…ALLS), 259-301 (MKFE…HLLT), and 310-353 (TELV…ALIE). Geranylgeranyl diphosphate-binding positions include 216–218 (HSG) and 280–283 (RENK). Zn(2+) is bound by residues aspartate 286 and cysteine 288. A geranylgeranyl diphosphate-binding site is contributed by 289–292 (YAFW). Residue histidine 341 participates in Zn(2+) binding.

The protein belongs to the protein prenyltransferase subunit beta family. In terms of assembly, heterodimer of an alpha (RAM2) and a beta (CDC43) subunit. The cofactor is Zn(2+). Mg(2+) is required as a cofactor.

It localises to the cytoplasm. The catalysed reaction is geranylgeranyl diphosphate + L-cysteinyl-[protein] = S-geranylgeranyl-L-cysteinyl-[protein] + diphosphate. Catalyzes the transfer of a geranyl-geranyl moiety from geranyl-geranyl diphosphate to proteins having the C-terminal sequence Cys-Ile-Ile-Leu or Cys-Val-Leu-Leu. Acts, among other substrates, on Rho1 and Rho2 and CDC42 proteins. Participates in a RAS-like C-terminal modification of proteins involved in nuclear division and bud growth. It is involved in bud positioning and cell polarity. The beta subunit is responsible for isoprenoid and peptide-binding. The polypeptide is Geranylgeranyl transferase type-1 subunit beta (CDC43) (Saccharomyces cerevisiae (strain ATCC 204508 / S288c) (Baker's yeast)).